Here is a 433-residue protein sequence, read N- to C-terminus: Ornithine decarboxylase, chloroplastic (433 aa).

An N6-(pyridoxal phosphate)lysine modification is found at lysine 96. Pyridoxal 5'-phosphate contacts are provided by residues serine 228, glycine 266, and 299–302 (EPGR). 342 to 343 (YD) contacts substrate. The active-site Proton donor; shared with dimeric partner is the cysteine 378. Aspartate 379 serves as a coordination point for substrate. Tyrosine 407 provides a ligand contact to pyridoxal 5'-phosphate.

It belongs to the Orn/Lys/Arg decarboxylase class-II family. As to quaternary structure, homodimer. Only the dimer is catalytically active, as the active sites are constructed of residues from both monomers. The cofactor is pyridoxal 5'-phosphate.

Its subcellular location is the plastid. The protein resides in the chloroplast. It carries out the reaction L-ornithine + H(+) = putrescine + CO2. It participates in alkaloid biosynthesis; nicotine biosynthesis. It functions in the pathway amine and polyamine biosynthesis; putrescine biosynthesis via L-ornithine pathway; putrescine from L-ornithine: step 1/1. In terms of biological role, involved in the biosynthesis of pyridine alkaloid natural products, leading mainly to the production of anabasine, anatabine, nicotine and nornicotine, effective deterrents against herbivores with antiparasitic and pesticide properties (neurotoxins); nornicotine serves as the precursor in the synthesis of the carcinogen compound N'-nitrosonornicotine (NNN). Catalyzes the first and rate-limiting step of polyamine biosynthesis that converts ornithine into putrescine, which is the precursor for the polyamines, spermidine and spermine. Polyamines are essential for cell proliferation and are implicated in cellular processes, ranging from DNA replication to apoptosis. The sequence is that of Ornithine decarboxylase, chloroplastic from Nicotiana glauca (Glaucous tobacco).